We begin with the raw amino-acid sequence, 127 residues long: MSKPIYVRFEVPEDLAEKAYEAVKRARETGRIKKGTNETTKAVERGLAKLVVIAEDVDPPEIVMHLPLLCDEKKIPYVYVPSKKRLGEAAGIEVAAASVAIIEPGDAETLVREIVEKVKELRAKAGV.

It belongs to the eukaryotic ribosomal protein eL8 family. In terms of assembly, part of the 50S ribosomal subunit. Probably part of the RNase P complex.

The protein resides in the cytoplasm. In terms of biological role, multifunctional RNA-binding protein that recognizes the K-turn motif in ribosomal RNA, the RNA component of RNase P, box H/ACA, box C/D and box C'/D' sRNAs. The polypeptide is Large ribosomal subunit protein eL8 (Aeropyrum pernix (strain ATCC 700893 / DSM 11879 / JCM 9820 / NBRC 100138 / K1)).